The sequence spans 146 residues: Large ribosomal subunit protein uL15 (146 aa).

Basic and acidic residues predominate over residues 1–13; that stretch reads MKLHELKPAEGSR. Residues 1–52 form a disordered region; sequence MKLHELKPAEGSRKVRNRVGRGIGSGNGKTAGKGHKGQNARSGGGVRLGFEG. Gly residues-rich tracts occupy residues 21-31 and 42-52; these read RGIGSGNGKTA and SGGGVRLGFEG.

The protein belongs to the universal ribosomal protein uL15 family. Part of the 50S ribosomal subunit.

Its function is as follows. Binds to the 23S rRNA. The chain is Large ribosomal subunit protein uL15 from Bacillus anthracis (strain A0248).